The chain runs to 241 residues: MITLKNVSKWYGHFQVLTDCSTEVKKGEVVVVCGPSGSGKSTLIKTVNGLEPVQQGEITVDGIVVNDKKTDLAKLRSRVGMVFQHFELFPHLSIIENLTLAQVKVLKRDKAPAREKALKLLERVGLSAHANKFPAQLSGGQQQRVAIARALCMDPIAMLFDEPTSALDPEMINEVLDVMVELANEGMTMMVVTHEMGFARKVANRVIFMDEGKIVEDSPKDAFFDDPKSDRAKDFLAKILH.

The ABC transporter domain maps to 2–236 (ITLKNVSKWY…PKSDRAKDFL (235 aa)). 34–41 (GPSGSGKS) is a binding site for ATP.

Belongs to the ABC transporter superfamily. In terms of assembly, the complex is composed of two ATP-binding proteins (GltL), two transmembrane proteins (GltJ and GltK) and a solute-binding protein (GltI).

The protein resides in the cell inner membrane. It carries out the reaction a polar amino acid(out) + ATP + H2O = a polar amino acid(in) + ADP + phosphate + H(+). The enzyme catalyses L-glutamate(out) + ATP + H2O = L-glutamate(in) + ADP + phosphate + H(+). The catalysed reaction is L-aspartate(out) + ATP + H2O = L-aspartate(in) + ADP + phosphate + H(+). Its function is as follows. Part of the ABC transporter complex GltIJKL involved in glutamate and aspartate uptake. Probably responsible for energy coupling to the transport system. In Escherichia coli O157:H7, this protein is Glutamate/aspartate import ATP-binding protein GltL (gltL).